The sequence spans 165 residues: NADPH-dependent 7-cyano-7-deazaguanine reductase (165 aa).

Cys56 acts as the Thioimide intermediate in catalysis. The active-site Proton donor is Asp63. Substrate contacts are provided by residues Val78–Ser80 and His97–Glu98.

It belongs to the GTP cyclohydrolase I family. QueF type 1 subfamily.

It is found in the cytoplasm. The catalysed reaction is 7-aminomethyl-7-carbaguanine + 2 NADP(+) = 7-cyano-7-deazaguanine + 2 NADPH + 3 H(+). It functions in the pathway tRNA modification; tRNA-queuosine biosynthesis. Its function is as follows. Catalyzes the NADPH-dependent reduction of 7-cyano-7-deazaguanine (preQ0) to 7-aminomethyl-7-deazaguanine (preQ1). The polypeptide is NADPH-dependent 7-cyano-7-deazaguanine reductase (Geobacillus thermodenitrificans (strain NG80-2)).